We begin with the raw amino-acid sequence, 228 residues long: MQEAGIDEFAAGGGHVEPAAEVDPAAALKAELRSKPGDWYVIHSYAGYENKVKANLETRVQNLDVGDCIFQVEVPTEEVTEIKNGQRRLVNRKVLPGYILVRMDLTDDSWAAVRNTPGVTGFVGATSRPSALALDDVVKFLLPSGSAKKDAKGAVSTAAAAEAGGLERSIIEVDYEVGESVTVMDGPFATLPATISEVNAEQQKLKVLVSIFGRETPVELTFSQVSKI.

This sequence belongs to the NusG family.

In terms of biological role, participates in transcription elongation, termination and antitermination. This Mycobacterium leprae (strain TN) protein is Transcription termination/antitermination protein NusG.